The primary structure comprises 150 residues: Large ribosomal subunit protein uL11 (150 aa).

Belongs to the universal ribosomal protein uL11 family. As to quaternary structure, part of the ribosomal stalk of the 50S ribosomal subunit. Interacts with L10 and the large rRNA to form the base of the stalk. L10 forms an elongated spine to which L12 dimers bind in a sequential fashion forming a multimeric L10(L12)X complex. Post-translationally, one or more lysine residues are methylated.

Its function is as follows. Forms part of the ribosomal stalk which helps the ribosome interact with GTP-bound translation factors. The chain is Large ribosomal subunit protein uL11 from Jannaschia sp. (strain CCS1).